The chain runs to 432 residues: Neuropeptide FF receptor 1 (432 aa).

The Extracellular portion of the chain corresponds to 1 to 43; sequence MEAEPSQPPNGSWPLGQNGSDVETSMATSLTFSSYYQHSSPVA. 2 N-linked (GlcNAc...) asparagine glycosylation sites follow: N10 and N18. The helical transmembrane segment at 44–64 threads the bilayer; sequence AMFIAAYVLIFLLCMVGNTLV. The Cytoplasmic portion of the chain corresponds to 65–80; that stretch reads CFIVLKNRHMRTVTNM. The helical transmembrane segment at 81–101 threads the bilayer; the sequence is FILNLAVSDLLVGIFCMPTTL. The Extracellular segment spans residues 102-117; it reads VDNLITGWPFDNATCK. N113 carries an N-linked (GlcNAc...) asparagine glycan. C116 and C203 are joined by a disulfide. The chain crosses the membrane as a helical span at residues 118 to 138; sequence MSGLVQGMSVSASVFTLVAIA. The Cytoplasmic segment spans residues 139-158; that stretch reads VERFRCIVHPFREKLTLRKA. The chain crosses the membrane as a helical span at residues 159-179; sequence LFTIAVIWALALLIMCPSAVT. The Extracellular portion of the chain corresponds to 180–214; it reads LTVTREEHHFMLDARNRSYPLYSCWEAWPEKGMRK. An N-linked (GlcNAc...) asparagine glycan is attached at N195. Residues 215–235 form a helical membrane-spanning segment; the sequence is VYTAVLFAHIYLVPLALIVVM. Residues 236-273 lie on the Cytoplasmic side of the membrane; sequence YVRIARKLCQAPGPARDTEEAVAEGGRTSRRRARVVHM. The helical transmembrane segment at 274–294 threads the bilayer; that stretch reads LVMVALFFTLSWLPLWVLLLL. The Extracellular segment spans residues 295 to 309; the sequence is IDYGELSELQLHLLS. Residues 310-330 form a helical membrane-spanning segment; sequence VYAFPLAHWLAFFHSSANPII. The Cytoplasmic portion of the chain corresponds to 331-432; the sequence is YGYFNENFRR…MPLTIPAWNI (102 aa). Residues 380–406 are compositionally biased toward low complexity; the sequence is PSDSGLPSESGPSSGVPGPGRLPLRNG. The segment at 380–422 is disordered; it reads PSDSGLPSESGPSSGVPGPGRLPLRNGRVAHQDGPGEGPGCNH.

Belongs to the G-protein coupled receptor 1 family. As to expression, expressed at high levels in the hypothalamus. Moderate levels found in the midbrain, thalamus, medulla oblongata, testis, eye, whole brain, cerebral cortex, striatum, hippocampus, cerebellum, optic nerve, placenta, spinal cord, pituitary gland and ovary.

It is found in the cell membrane. Receptor for NPAF (A-18-F-amide) and NPFF (F-8-F-amide) neuropeptides, also known as morphine-modulating peptides. Can also be activated by a variety of naturally occurring or synthetic FMRF-amide like ligands. This receptor mediates its action by association with G proteins that activate a phosphatidylinositol-calcium second messenger system. The polypeptide is Neuropeptide FF receptor 1 (Npffr1) (Rattus norvegicus (Rat)).